Here is a 592-residue protein sequence, read N- to C-terminus: K(+) efflux antiporter 4 (592 aa).

Positions 1 to 35 (MRRCKNNTDKFSVITMRLLTLLLICTFFFFFSFAY) are cleaved as a signal peptide. 12 helical membrane-spanning segments follow: residues 169–189 (LISD…AFAC), 193–213 (PVIT…LSFV), 221–241 (TVAQ…FSAA), 248–268 (AVAI…SGIT), 279–299 (GIFV…KFLM), 313–333 (VGTL…LPVL), 343–363 (VLSM…LFVL), 388–408 (LAAV…GLSL), 437–457 (NFFA…HFLW), 462–482 (ILLA…AIVV), 491–511 (TAVL…VLLS), and 535–555 (LVTT…GVLL).

This sequence belongs to the monovalent cation:proton antiporter 2 (CPA2) transporter (TC 2.A.37) family. KEA (TC 2.A.37.1) subfamily. Expressed in roots, stems, leaves, flowers and silique.

It is found in the golgi apparatus membrane. The protein resides in the golgi apparatus. It localises to the trans-Golgi network membrane. Its subcellular location is the prevacuolar compartment membrane. The protein localises to the endomembrane system. The enzyme catalyses K(+)(in) + H(+)(out) = K(+)(out) + H(+)(in). Its function is as follows. Electroneutral K(+)/H(+) efflux antiporter involved in K(+) homeostasis and osmotic adjustment. Together with KEA5 and KEA6, promotes growth and development, and facilitates endosomal pH and ions homeostasis, as well as salt tolerance (e.g. K(+), NaCl and LiCl), probably by supporting cell wall biosynthesis during rapid etiolated seedling growth. The polypeptide is K(+) efflux antiporter 4 (Arabidopsis thaliana (Mouse-ear cress)).